Here is a 904-residue protein sequence, read N- to C-terminus: HTH-type transcriptional regulator MalT (904 aa).

39–46 (CPAGYGKT) lines the ATP pocket. In terms of domain architecture, HTH luxR-type spans 832 to 897 (ELIRTSPLTQ…EAVQQAQQLL (66 aa)). The H-T-H motif DNA-binding region spans 856–875 (NDQIAGELAVAATTIKTHIR).

This sequence belongs to the MalT family. As to quaternary structure, monomer in solution. Oligomerizes to an active state in the presence of the positive effectors ATP and maltotriose.

Its activity is regulated as follows. Activated by ATP and maltotriose, which are both required for DNA binding. Its function is as follows. Positively regulates the transcription of the maltose regulon whose gene products are responsible for uptake and catabolism of malto-oligosaccharides. Specifically binds to the promoter region of its target genes, recognizing a short DNA motif called the MalT box. The protein is HTH-type transcriptional regulator MalT of Serratia proteamaculans (strain 568).